The chain runs to 227 residues: Ion-translocating oxidoreductase complex subunit E (227 aa).

A run of 6 helical transmembrane segments spans residues 18-38 (ALVQ…VTNA), 39-59 (LGLG…VSLV), 69-89 (IPVF…LMNA), 93-113 (GLYL…IIIG), 125-145 (LPAV…LVLL), and 182-202 (HFLL…LIAL).

The protein belongs to the NqrDE/RnfAE family. In terms of assembly, the complex is composed of six subunits: RnfA, RnfB, RnfC, RnfD, RnfE and RnfG.

It is found in the cell inner membrane. In terms of biological role, part of a membrane-bound complex that couples electron transfer with translocation of ions across the membrane. This Aliivibrio fischeri (strain MJ11) (Vibrio fischeri) protein is Ion-translocating oxidoreductase complex subunit E.